The chain runs to 203 residues: Glycerol-3-phosphate acyltransferase (203 aa).

4 helical membrane-spanning segments follow: residues 6–26, 82–102, 118–138, and 141–161; these read LTLL…AVLV, AISL…PVFF, APIG…LVLI, and YSSL…WWLD.

It belongs to the PlsY family. As to quaternary structure, probably interacts with PlsX.

The protein resides in the cell inner membrane. It catalyses the reaction an acyl phosphate + sn-glycerol 3-phosphate = a 1-acyl-sn-glycero-3-phosphate + phosphate. The protein operates within lipid metabolism; phospholipid metabolism. Catalyzes the transfer of an acyl group from acyl-phosphate (acyl-PO(4)) to glycerol-3-phosphate (G3P) to form lysophosphatidic acid (LPA). This enzyme utilizes acyl-phosphate as fatty acyl donor, but not acyl-CoA or acyl-ACP. The sequence is that of Glycerol-3-phosphate acyltransferase from Shewanella oneidensis (strain ATCC 700550 / JCM 31522 / CIP 106686 / LMG 19005 / NCIMB 14063 / MR-1).